The following is a 153-amino-acid chain: Transcription antitermination protein NusB (153 aa).

The protein belongs to the NusB family.

Its function is as follows. Involved in transcription antitermination. Required for transcription of ribosomal RNA (rRNA) genes. Binds specifically to the boxA antiterminator sequence of the ribosomal RNA (rrn) operons. This Clostridium tetani (strain Massachusetts / E88) protein is Transcription antitermination protein NusB.